A 260-amino-acid chain; its full sequence is UPF0246 protein APP7_0648 (260 aa).

The protein belongs to the UPF0246 family.

The polypeptide is UPF0246 protein APP7_0648 (Actinobacillus pleuropneumoniae serotype 7 (strain AP76)).